A 360-amino-acid polypeptide reads, in one-letter code: Phospho-N-acetylmuramoyl-pentapeptide-transferase (360 aa).

The next 10 membrane-spanning stretches (helical) occupy residues 21 to 41 (YVTF…LWWG), 74 to 94 (MGGI…GDLG), 97 to 117 (YVWV…IDDY), 135 to 155 (ILQS…ADTV), 168 to 188 (IMPQ…VGSS), 199 to 219 (GLAI…AYLS), 236 to 256 (AGEL…FLWF), 263 to 283 (VFMG…IAVL), 288 to 308 (ILLV…ILQV), and 338 to 358 (VIVR…ATLK).

It belongs to the glycosyltransferase 4 family. MraY subfamily. Mg(2+) serves as cofactor.

It is found in the cell inner membrane. The catalysed reaction is UDP-N-acetyl-alpha-D-muramoyl-L-alanyl-gamma-D-glutamyl-meso-2,6-diaminopimeloyl-D-alanyl-D-alanine + di-trans,octa-cis-undecaprenyl phosphate = di-trans,octa-cis-undecaprenyl diphospho-N-acetyl-alpha-D-muramoyl-L-alanyl-D-glutamyl-meso-2,6-diaminopimeloyl-D-alanyl-D-alanine + UMP. The protein operates within cell wall biogenesis; peptidoglycan biosynthesis. Catalyzes the initial step of the lipid cycle reactions in the biosynthesis of the cell wall peptidoglycan: transfers peptidoglycan precursor phospho-MurNAc-pentapeptide from UDP-MurNAc-pentapeptide onto the lipid carrier undecaprenyl phosphate, yielding undecaprenyl-pyrophosphoryl-MurNAc-pentapeptide, known as lipid I. The polypeptide is Phospho-N-acetylmuramoyl-pentapeptide-transferase (Shewanella violacea (strain JCM 10179 / CIP 106290 / LMG 19151 / DSS12)).